The sequence spans 132 residues: Small ribosomal subunit protein uS19 (132 aa).

It belongs to the universal ribosomal protein uS19 family.

Its function is as follows. Protein S19 forms a complex with S13 that binds strongly to the 16S ribosomal RNA. This chain is Small ribosomal subunit protein uS19 (rps19), found in Pyrococcus abyssi (strain GE5 / Orsay).